The sequence spans 418 residues: Putative ion-transport protein YfeO (418 aa).

Helical transmembrane passes span Leu10–Val30, Asp54–Ile74, Ala99–Pro119, Glu120–Pro140, Ile149–Ile169, Leu186–Pro206, Ile223–Cys243, Val258–Val278, Asp300–Phe320, Gly322–His342, Val343–Val363, and Leu371–Met391.

Belongs to the chloride channel (TC 2.A.49) family.

The protein localises to the cell membrane. The chain is Putative ion-transport protein YfeO from Shigella boydii serotype 4 (strain Sb227).